Here is a 273-residue protein sequence, read N- to C-terminus: Dermonecrotic toxin LdSicTox-alphaIB1avi (273 aa).

Residue His5 is part of the active site. Mg(2+) is bound by residues Glu25 and Asp27. Residue His41 is the Nucleophile of the active site. Disulfide bonds link Cys45–Cys51 and Cys47–Cys190. A Mg(2+)-binding site is contributed by Asp85. Asn250 is a glycosylation site (N-linked (GlcNAc...) asparagine).

Belongs to the arthropod phospholipase D family. Class II subfamily. Requires Mg(2+) as cofactor. In terms of tissue distribution, expressed by the venom gland.

It is found in the secreted. The catalysed reaction is an N-(acyl)-sphingosylphosphocholine = an N-(acyl)-sphingosyl-1,3-cyclic phosphate + choline. It carries out the reaction an N-(acyl)-sphingosylphosphoethanolamine = an N-(acyl)-sphingosyl-1,3-cyclic phosphate + ethanolamine. It catalyses the reaction a 1-acyl-sn-glycero-3-phosphocholine = a 1-acyl-sn-glycero-2,3-cyclic phosphate + choline. The enzyme catalyses a 1-acyl-sn-glycero-3-phosphoethanolamine = a 1-acyl-sn-glycero-2,3-cyclic phosphate + ethanolamine. Dermonecrotic toxins cleave the phosphodiester linkage between the phosphate and headgroup of certain phospholipids (sphingolipid and lysolipid substrates), forming an alcohol (often choline) and a cyclic phosphate. This toxin acts on sphingomyelin (SM). It may also act on ceramide phosphoethanolamine (CPE), lysophosphatidylcholine (LPC) and lysophosphatidylethanolamine (LPE), but not on lysophosphatidylserine (LPS), and lysophosphatidylglycerol (LPG). It acts by transphosphatidylation, releasing exclusively cyclic phosphate products as second products. Induces dermonecrosis, hemolysis, increased vascular permeability, edema, inflammatory response, and platelet aggregation. This chain is Dermonecrotic toxin LdSicTox-alphaIB1avi, found in Loxosceles deserta (Desert recluse spider).